The following is a 540-amino-acid chain: Chaperonin GroEL 3 (540 aa).

ATP contacts are provided by residues 30 to 33, K51, 87 to 91, G415, 479 to 481, and D495; these read TLGP, DGTTT, and NAA.

It belongs to the chaperonin (HSP60) family. As to quaternary structure, forms a cylinder of 14 subunits composed of two heptameric rings stacked back-to-back. Interacts with the co-chaperonin GroES.

The protein localises to the cytoplasm. The catalysed reaction is ATP + H2O + a folded polypeptide = ADP + phosphate + an unfolded polypeptide.. Functionally, together with its co-chaperonin GroES, plays an essential role in assisting protein folding. The GroEL-GroES system forms a nano-cage that allows encapsulation of the non-native substrate proteins and provides a physical environment optimized to promote and accelerate protein folding. This Burkholderia cenocepacia (strain HI2424) protein is Chaperonin GroEL 3.